Here is a 190-residue protein sequence, read N- to C-terminus: Cancer-related nucleoside-triphosphatase homolog (190 aa).

ATP-binding positions include 9–16 and 109–116; these read GPPGVGKT and VCIIDEIG. Lys165 carries the N6-acetyllysine modification.

It belongs to the THEP1 NTPase family. In terms of assembly, monomer.

The enzyme catalyses a ribonucleoside 5'-triphosphate + H2O = a ribonucleoside 5'-diphosphate + phosphate + H(+). It carries out the reaction 5-methyl-UTP + H2O = 5-methyl-UDP + phosphate + H(+). The catalysed reaction is CTP + H2O = CDP + phosphate + H(+). It catalyses the reaction ATP + H2O = ADP + phosphate + H(+). The enzyme catalyses GTP + H2O = GDP + phosphate + H(+). Its function is as follows. Has nucleotide phosphatase activity towards ATP, GTP, CTP, TTP and UTP. Hydrolyzes nucleoside diphosphates with lower efficiency. The protein is Cancer-related nucleoside-triphosphatase homolog of Mus musculus (Mouse).